Reading from the N-terminus, the 269-residue chain is Putative aga operon transcriptional repressor (269 aa).

The region spanning 15 to 70 is the HTH deoR-type domain; it reads TSERREQIIQRLRQQGSVQVNDLSALYGVSTVTIRNDLAFLEKQGIAVRAYGGALI. Residues 32 to 51 constitute a DNA-binding region (H-T-H motif); it reads VQVNDLSALYGVSTVTIRND.

Its function is as follows. Probable repressor for the aga operon for N-acetyl galactosamine transport and metabolism. This is Putative aga operon transcriptional repressor (agaR) from Escherichia coli O157:H7.